Consider the following 365-residue polypeptide: Myb/SANT-like DNA-binding domain-containing protein 3 (365 aa).

A Myb-like domain is found at 13-78 (FSELEKSVLL…QLKKCWENIK (66 aa)). Positions 301 to 337 (QLIQMNEVHVAKVQQIERECEMAEEEHRIKMEILNKK) form a coiled coil.

Belongs to the MSANTD3 family.

The sequence is that of Myb/SANT-like DNA-binding domain-containing protein 3 (msantd3) from Xenopus laevis (African clawed frog).